The sequence spans 411 residues: Thyroid hormone receptor beta (411 aa).

The disordered stretch occupies residues 1 to 24; the sequence is MTPNSMTENGLPAWDKPKPCPDGE. Residues 1–104 form a modulating region; it reads MTPNSMTENG…IPSYLDKDEL (104 aa). Basic and acidic residues predominate over residues 15-24; the sequence is DKPKPCPDGE. Residues Cys105, Cys108, Cys122, Cys125, Cys143, Cys149, Cys159, and Cys162 each contribute to the Zn(2+) site. 2 NR C4-type zinc fingers span residues 105-125 and 143-167; these read CVVCGDKATGYHYRCITCEGC and CKYEGKCVIDKVTRNQCQECRFKKC. A DNA-binding region (nuclear receptor) is located at residues 105 to 179; it reads CVVCGDKATG…VGMATDLVLD (75 aa). In terms of domain architecture, NR LBD spans 215–411; it reads QEWELIKTVT…EHYINYRRNS (197 aa). The tract at residues 242–411 is interaction with NR2F6; the sequence is KFLPEDIGQA…EHYINYRRNS (170 aa). 3,3',5-triiodo-L-thyronine is bound by residues Arg280 and Asn329. The L-thyroxine site is built by Arg280 and Asn329.

Belongs to the nuclear hormone receptor family. NR1 subfamily. Binds DNA as a dimer; homodimer and heterodimer with RXRA. Interacts with the coactivators NCOA1/SRC1, NCOA2/GRIP1, NCOA7 and MED1/TRAP220 in a ligand-inducible manner. Interacts with the corepressor NCOR1 in absence of ligand. Interacts with C1D. Interacts with NR2F6; the interaction impairs the binding of the THRB homodimer and THRB:RXRB heterodimer to T3 response elements. Interacts with PRMT2 and THRSP. Interacts with TACC1; this interaction is decreased in the presence of thyroid hormone T3.

The protein resides in the nucleus. Nuclear hormone receptor that can act as a repressor or activator of transcription. High affinity receptor for thyroid hormones, including triiodothyronine and thyroxine. This Ovis aries (Sheep) protein is Thyroid hormone receptor beta (THRB).